Here is a 676-residue protein sequence, read N- to C-terminus: DNA ligase (676 aa).

NAD(+) is bound by residues 41–45 (DLTYD), 90–91 (SL), and Glu-123. Lys-125 (N6-AMP-lysine intermediate) is an active-site residue. NAD(+) is bound by residues Arg-146, Glu-180, Lys-293, and Lys-317. Residues Cys-408, Cys-411, Cys-424, and Cys-429 each coordinate Zn(2+).

The protein belongs to the NAD-dependent DNA ligase family. LigA subfamily. Mg(2+) is required as a cofactor. Mn(2+) serves as cofactor.

The enzyme catalyses NAD(+) + (deoxyribonucleotide)n-3'-hydroxyl + 5'-phospho-(deoxyribonucleotide)m = (deoxyribonucleotide)n+m + AMP + beta-nicotinamide D-nucleotide.. DNA ligase that catalyzes the formation of phosphodiester linkages between 5'-phosphoryl and 3'-hydroxyl groups in double-stranded DNA using NAD as a coenzyme and as the energy source for the reaction. It is essential for DNA replication and repair of damaged DNA. In Borrelia turicatae (strain 91E135), this protein is DNA ligase.